The sequence spans 401 residues: MEQVYSVTQVNNYIKNMFVKDYVLNRIYMKGEVSNCKYHTSGHIYFTLKDETGQMACVLFAGYRTGLPFRLEEGQSVIVLGSISVYERDGKYQLYAKEIKLDGLGLLYERFELLKRKLNEEGLFDPSHKKTLVPYPRTVGIVTASTGAAIQDIINISKRRNPYVQLVLYPAKVQGEGAAKTIVAGIKALEAKGVDTIIVGRGGGSIEDLWAFNEEMVARAIFDCSIPIISAVGHETDITISDFVSDLRAPTPSAAAELAVPEIESLLSNLVDYHYSLVQCVMRKITMARSELEKKQLQLTHLSPVYALRQKRQYTIDLENKLRQRMNELIRYKRHLLDIQIERLKAASPLDKLKSGFSYVSDSSGKVVNSITKTKPGDELTIAVTDGMIKAKTIGVESIER.

Belongs to the XseA family. Heterooligomer composed of large and small subunits.

The protein localises to the cytoplasm. The catalysed reaction is Exonucleolytic cleavage in either 5'- to 3'- or 3'- to 5'-direction to yield nucleoside 5'-phosphates.. Its function is as follows. Bidirectionally degrades single-stranded DNA into large acid-insoluble oligonucleotides, which are then degraded further into small acid-soluble oligonucleotides. The protein is Exodeoxyribonuclease 7 large subunit of Lachnoclostridium phytofermentans (strain ATCC 700394 / DSM 18823 / ISDg) (Clostridium phytofermentans).